Consider the following 313-residue polypeptide: MKEKIVIALGGNAIQTKEATAEAQQTAIRRAMQNLKPLFDSPARIVISHGNGPQIGSLLIQQAKSNSDTTPAMPLDTCGAMSQGMIGYWLETEINRILTEMNSDRTVGTIVTRVEVDKNDPRFDNPTKPIGPFYTKEEVEELQKEQPDSVFKEDAGRGYRKVVASPLPQSILEHQLIRTLADGKNIVIACGGGGIPVIKKENTYEGVEAVIDKDFASEKLATLIEADTLMILTNVENVFINFNEPNQQQIDDIDVATLKKYVAQGKFAEGSMLPKIEAAIRFVESGENKKVIITNLEQAYEALIGNKGTHIHM.

It belongs to the carbamate kinase family.

The protein resides in the cytoplasm. It carries out the reaction hydrogencarbonate + NH4(+) + ATP = carbamoyl phosphate + ADP + H2O + H(+). It functions in the pathway metabolic intermediate metabolism; carbamoyl phosphate degradation; CO(2) and NH(3) from carbamoyl phosphate: step 1/1. This chain is Carbamate kinase 2 (arcC2), found in Staphylococcus aureus (strain bovine RF122 / ET3-1).